We begin with the raw amino-acid sequence, 433 residues long: Pyrimidine-nucleoside phosphorylase (433 aa).

Position 81–83 (81–83) interacts with phosphate; that stretch reads KHS. Glycine 88 and threonine 90 together coordinate K(+). Residues threonine 92, 108-110, and threonine 120 each bind phosphate; that span reads KMS. Substrate contacts are provided by arginine 168 and lysine 187. 3 residues coordinate K(+): leucine 243, alanine 246, and glutamate 255.

It belongs to the thymidine/pyrimidine-nucleoside phosphorylase family. In terms of assembly, homodimer. It depends on K(+) as a cofactor.

The catalysed reaction is uridine + phosphate = alpha-D-ribose 1-phosphate + uracil. It carries out the reaction thymidine + phosphate = 2-deoxy-alpha-D-ribose 1-phosphate + thymine. The enzyme catalyses 2'-deoxyuridine + phosphate = 2-deoxy-alpha-D-ribose 1-phosphate + uracil. In terms of biological role, catalyzes phosphorolysis of the pyrimidine nucleosides uridine, thymidine and 2'-deoxyuridine with the formation of the corresponding pyrimidine base and ribose-1-phosphate. The sequence is that of Pyrimidine-nucleoside phosphorylase (pdp) from Staphylococcus aureus (strain NCTC 8325 / PS 47).